A 272-amino-acid polypeptide reads, in one-letter code: 3',5'-cyclic adenosine monophosphate phosphodiesterase CpdA (272 aa).

Residues D21, H23, D63, N93, H161, H200, and H202 each coordinate Fe cation. AMP-binding positions include H23, D63, and 93-94; that span reads NH. H202 contacts AMP.

Belongs to the cyclic nucleotide phosphodiesterase class-III family. Monomer. It depends on a divalent metal cation as a cofactor.

It carries out the reaction 3',5'-cyclic AMP + H2O = AMP + H(+). Activated by iron. Other divalent metal ions have no effect. Hydrolyzes cAMP to 5'-AMP. Plays an important regulatory role in modulating the intracellular concentration of cAMP, thereby influencing cAMP-dependent processes. Specifically required for regulation of virulence factors. Can also hydrolyze cGMP, but cGMP is unlikely to be synthesized by P.aeruginosa and cAMP is probably the biologically relevant substrate for CpdA in vivo. The polypeptide is 3',5'-cyclic adenosine monophosphate phosphodiesterase CpdA (Pseudomonas aeruginosa).